The chain runs to 2238 residues: Golgin subfamily A member 4 (2238 aa).

The interval 1–90 (MFKKLKQKIS…QTFAQKLQLR (90 aa)) is disordered. At Ser10 the chain carries Phosphoserine. Residues 12–41 (EQQQLQQALAPAQASSSSSTPTRTRSRTSS) are compositionally biased toward low complexity. Thr39 carries the post-translational modification Phosphothreonine. Residue Ser41 is modified to Phosphoserine. 2 stretches are compositionally biased toward polar residues: residues 52-62 (NRENASTQATK) and 73-85 (SPSQ…TFAQ). Phosphoserine occurs at positions 93 and 100. Disordered regions lie at residues 132-154 (AAAF…NSDG), 1695-1744 (LKER…SQDC), and 1770-1789 (LEQG…HRAL). The tract at residues 154–224 (GLSREQLLQR…EELQMDQQAK (71 aa)) is interaction with MACF1. Residues 156–2161 (SREQLLQRLR…RYEKNACAAT (2006 aa)) are a coiled coil. A compositionally biased stretch (basic and acidic residues) spans 1695–1711 (LKEREKQVHSLEDKLKN). The 48-residue stretch at 2178-2225 (LFGEPTEFEYLRKVMFEYMMGRETKTMAKVITTVLKFPDDQAQKILER) folds into the GRIP domain.

As to quaternary structure, homodimer. Interacts with GTP-bound ARL1 and ARL3. Interacts with MACF1. Directly interacts with TBC1D23. Interacts with FAM91A1; this interaction may be mediated by TBC1D23. Ubiquitous. Highly expressed in oligodendrocyte precursors, particularly at a stage just prior to myelination.

The protein resides in the cytoplasm. The protein localises to the golgi apparatus membrane. It localises to the golgi apparatus. It is found in the trans-Golgi network membrane. Involved in vesicular trafficking at the Golgi apparatus level. May play a role in delivery of transport vesicles containing GPI-linked proteins from the trans-Golgi network through its interaction with MACF1. Involved in endosome-to-Golgi trafficking. This Mus musculus (Mouse) protein is Golgin subfamily A member 4 (Golga4).